We begin with the raw amino-acid sequence, 172 residues long: Type VI secretion system sheath protein TssB1 (172 aa).

Forms a heterodimer with TssC1. Heterodimers assemble to form the sheath of the T6SS machinery. Interacts with TagJ. Interacts with TssA1.

Its function is as follows. Core component of the H1 type VI (H1-T6SS) secretion system that plays a role in the release of toxins targeting both eukaryotic and prokaryotic species. Forms the sheath of the structure by assembling into tubules together with TssC1 resulting in the stacking of cogwheel-like structures showing predominantly a 12-fold symmetry. The sheath contracts to provide the energy needed for effector delivery. In Pseudomonas aeruginosa (strain ATCC 15692 / DSM 22644 / CIP 104116 / JCM 14847 / LMG 12228 / 1C / PRS 101 / PAO1), this protein is Type VI secretion system sheath protein TssB1.